We begin with the raw amino-acid sequence, 186 residues long: Large ribosomal subunit protein uL10 (186 aa).

It belongs to the universal ribosomal protein uL10 family. In terms of assembly, part of the ribosomal stalk of the 50S ribosomal subunit. The N-terminus interacts with L11 and the large rRNA to form the base of the stalk. The C-terminus forms an elongated spine to which L12 dimers bind in a sequential fashion forming a multimeric L10(L12)X complex.

Forms part of the ribosomal stalk, playing a central role in the interaction of the ribosome with GTP-bound translation factors. The sequence is that of Large ribosomal subunit protein uL10 from Rhodococcus jostii (strain RHA1).